The sequence spans 120 residues: MKRTRTESVQRRHSRIRRKVEGTPSRPRLAVFRSNNHIYAQVIDDVAQHTLVAASTLDKDLKGEFSSGATCEASEAVGKLVAQRALAKGIEKVVFDRGGNLYHGRIRALAQAAREAGLDF.

Over residues M1–Q10 the composition is skewed to basic and acidic residues. The interval M1 to P24 is disordered.

The protein belongs to the universal ribosomal protein uL18 family. In terms of assembly, part of the 50S ribosomal subunit; part of the 5S rRNA/L5/L18/L25 subcomplex. Contacts the 5S and 23S rRNAs.

This is one of the proteins that bind and probably mediate the attachment of the 5S RNA into the large ribosomal subunit, where it forms part of the central protuberance. The protein is Large ribosomal subunit protein uL18 of Gloeothece citriformis (strain PCC 7424) (Cyanothece sp. (strain PCC 7424)).